Consider the following 367-residue polypeptide: Glutamate 5-kinase (367 aa).

Lys-10 is an ATP binding site. Ser-50, Asp-137, and Asn-149 together coordinate substrate. Residues 169–170 and 211–217 each bind ATP; these read TD and TGGMGTK. Residues 275–353 enclose the PUA domain; the sequence is AGEITVDEGA…QQIDAILGYE (79 aa).

This sequence belongs to the glutamate 5-kinase family.

It localises to the cytoplasm. It catalyses the reaction L-glutamate + ATP = L-glutamyl 5-phosphate + ADP. It functions in the pathway amino-acid biosynthesis; L-proline biosynthesis; L-glutamate 5-semialdehyde from L-glutamate: step 1/2. Its function is as follows. Catalyzes the transfer of a phosphate group to glutamate to form L-glutamate 5-phosphate. The sequence is that of Glutamate 5-kinase from Enterobacter sp. (strain 638).